A 142-amino-acid polypeptide reads, in one-letter code: Large ribosomal subunit protein uL22 (142 aa).

The disordered stretch occupies residues 122-142 (RAEAPEETKPSRGTNKEQKAA).

It belongs to the universal ribosomal protein uL22 family. In terms of assembly, part of the 50S ribosomal subunit.

In terms of biological role, this protein binds specifically to 23S rRNA; its binding is stimulated by other ribosomal proteins, e.g. L4, L17, and L20. It is important during the early stages of 50S assembly. It makes multiple contacts with different domains of the 23S rRNA in the assembled 50S subunit and ribosome. Functionally, the globular domain of the protein is located near the polypeptide exit tunnel on the outside of the subunit, while an extended beta-hairpin is found that lines the wall of the exit tunnel in the center of the 70S ribosome. The protein is Large ribosomal subunit protein uL22 of Gluconobacter oxydans (strain 621H) (Gluconobacter suboxydans).